A 674-amino-acid polypeptide reads, in one-letter code: Membrane-anchored lipid-binding protein LAM5 (674 aa).

2 disordered regions span residues 1-52 (MSDV…LNTE) and 65-151 (NQSA…GSPL). Residues 1 to 633 (MSDVDNWEPV…AEQQGLKVTM (633 aa)) are Cytoplasmic-facing. Residues 69 to 81 (ADEHPTEIKHDQS) are compositionally biased toward basic and acidic residues. Low complexity predominate over residues 82 to 119 (RTSSTSSFFSGMISSFKSNVPSPVSRSTTPTSPVSQPS). Position 110 is a phosphothreonine (Thr110). Ser113 and Ser140 each carry phosphoserine. The residue at position 143 (Thr143) is a Phosphothreonine. At Ser149 the chain carries Phosphoserine. Positions 198 to 264 (KDFHETFKSV…FEDVTFMEKT (67 aa)) constitute a GRAM domain. The span at 336–357 (IDEENNDKDANDNDTNENDDEN) shows a compositional bias: acidic residues. Positions 336–380 (IDEENNDKDANDNDTNENDDENISTNETTPNSTSSSPDKEKEKAY) are disordered. A compositionally biased stretch (low complexity) spans 358–371 (ISTNETTPNSTSSS). The VASt domain maps to 409-582 (NEFVLKELPF…ILSKFIKNNV (174 aa)). Residues 634 to 654 (ETWLFLYLIVVVLLLFNLFYI) traverse the membrane as a helical segment. Over 655–674 (RSIAVSLHQLVKLQLVELKL) the chain is Lumenal.

It belongs to the YSP2 family.

The protein resides in the endoplasmic reticulum membrane. Its function is as follows. May be involved in sterol transfer between intracellular membranes. The polypeptide is Membrane-anchored lipid-binding protein LAM5 (Saccharomyces cerevisiae (strain ATCC 204508 / S288c) (Baker's yeast)).